Consider the following 388-residue polypeptide: Succinate--CoA ligase [ADP-forming] subunit beta (388 aa).

ATP contacts are provided by residues K46, 53 to 55 (GRG), E99, C102, and E107. N199 and D213 together coordinate Mg(2+). Substrate contacts are provided by residues N264 and 321 to 323 (GIV).

Belongs to the succinate/malate CoA ligase beta subunit family. As to quaternary structure, heterotetramer of two alpha and two beta subunits. Requires Mg(2+) as cofactor.

It catalyses the reaction succinate + ATP + CoA = succinyl-CoA + ADP + phosphate. The catalysed reaction is GTP + succinate + CoA = succinyl-CoA + GDP + phosphate. Its pathway is carbohydrate metabolism; tricarboxylic acid cycle; succinate from succinyl-CoA (ligase route): step 1/1. Functionally, succinyl-CoA synthetase functions in the citric acid cycle (TCA), coupling the hydrolysis of succinyl-CoA to the synthesis of either ATP or GTP and thus represents the only step of substrate-level phosphorylation in the TCA. The beta subunit provides nucleotide specificity of the enzyme and binds the substrate succinate, while the binding sites for coenzyme A and phosphate are found in the alpha subunit. The polypeptide is Succinate--CoA ligase [ADP-forming] subunit beta (Actinobacillus pleuropneumoniae serotype 7 (strain AP76)).